The following is a 304-amino-acid chain: Dihydroorotate dehydrogenase B (NAD(+)), catalytic subunit (304 aa).

FMN is bound by residues serine 21 and 45–46 (KA). Residues lysine 45 and 69–73 (NAIGL) contribute to the substrate site. FMN contacts are provided by asparagine 99 and asparagine 127. Asparagine 127 serves as a coordination point for substrate. Cysteine 130 serves as the catalytic Nucleophile. Positions 165 and 191 each coordinate FMN. Residue 192 to 193 (NT) coordinates substrate. FMN-binding positions include glycine 217, 243-244 (GG), and 265-266 (GT).

It belongs to the dihydroorotate dehydrogenase family. Type 1 subfamily. In terms of assembly, heterotetramer of 2 PyrK and 2 PyrD type B subunits. The cofactor is FMN.

The protein resides in the cytoplasm. The catalysed reaction is (S)-dihydroorotate + NAD(+) = orotate + NADH + H(+). It participates in pyrimidine metabolism; UMP biosynthesis via de novo pathway; orotate from (S)-dihydroorotate (NAD(+) route): step 1/1. Catalyzes the conversion of dihydroorotate to orotate with NAD(+) as electron acceptor. The polypeptide is Dihydroorotate dehydrogenase B (NAD(+)), catalytic subunit (pyrD) (Listeria monocytogenes serotype 4a (strain HCC23)).